The sequence spans 195 residues: Cysteine/O-acetylserine efflux protein (195 aa).

The Periplasmic segment spans residues 1-7 (MTPTLLS). A helical membrane pass occupies residues 8-28 (AFWTYTLITAMTPGPNNILAL). At 29 to 46 (SSATTHGFHQSTRVLAGM) the chain is on the cytoplasmic side. A helical membrane pass occupies residues 47–67 (SLGFLIVMLLCAGISFSLAVI). Residues 68 to 69 (DP) are Periplasmic-facing. The chain crosses the membrane as a helical span at residues 70-90 (AAVHLLSWAGAAYIVWLAWKI). At 91–104 (ATSPTKEDGLQTKP) the chain is on the cytoplasmic side. The helical transmembrane segment at 105 to 125 (ISFWASFALQFVNVKIILYGV) threads the bilayer. The Periplasmic segment spans residues 126 to 141 (TALSTFVLPQTQALSW). The chain crosses the membrane as a helical span at residues 142–162 (IVGVSVLLAMIGTFGNVCWAL). The Cytoplasmic segment spans residues 163-176 (AGHLFQRLFRQYGR). The chain crosses the membrane as a helical span at residues 177–194 (QLNIVLALLLIYCAVRIF). A topological domain (periplasmic) is located at residue Tyr-195.

The protein belongs to the Rht family.

The protein localises to the cell inner membrane. The enzyme catalyses O-acetyl-L-serine(in) = O-acetyl-L-serine(out). It catalyses the reaction L-cysteine(in) = L-cysteine(out). In terms of biological role, exporter of O-acetylserine (OAS) and cysteine. The protein is Cysteine/O-acetylserine efflux protein (eamB) of Escherichia coli O157:H7.